The primary structure comprises 590 residues: DNA primase (590 aa).

Residues 37-61 form a CHC2-type zinc finger; it reads CPFHKEKTPSFSVSPTKQFYHCFSC. Residues 255–337 form the Toprim domain; sequence GRILVVEGYM…DKSLHFLFLP (83 aa). Mg(2+) is bound by residues Glu261, Asp305, and Asp307.

The protein belongs to the DnaG primase family. As to quaternary structure, monomer. Interacts with DnaB. It depends on Zn(2+) as a cofactor. Mg(2+) is required as a cofactor.

The catalysed reaction is ssDNA + n NTP = ssDNA/pppN(pN)n-1 hybrid + (n-1) diphosphate.. Its function is as follows. RNA polymerase that catalyzes the synthesis of short RNA molecules used as primers for DNA polymerase during DNA replication. This is DNA primase from Neisseria meningitidis serogroup A / serotype 4A (strain DSM 15465 / Z2491).